The sequence spans 2290 residues: Protein Ycf2 (2290 aa).

The tract at residues 505-530 (GSNPTERSTRDQKSLKKQQDVSFVPP) is disordered. A compositionally biased stretch (basic and acidic residues) spans 511 to 523 (RSTRDQKSLKKQQ). ATP is bound at residue 1639-1646 (GSIGTGRS).

Belongs to the Ycf2 family.

The protein resides in the plastid. The protein localises to the chloroplast stroma. Functionally, probable ATPase of unknown function. Its presence in a non-photosynthetic plant (Epifagus virginiana) and experiments in tobacco indicate that it has an essential function which is probably not related to photosynthesis. This is Protein Ycf2 from Ceratophyllum demersum (Rigid hornwort).